Consider the following 321-residue polypeptide: Malate dehydrogenase (321 aa).

NAD(+) contacts are provided by residues 10 to 15 and Asp34; that span reads GSGMIG. Substrate is bound by residues Arg83 and Arg89. Residues Asn96 and 119–121 each bind NAD(+); that span reads ITN. Residues Asn121 and Arg152 each contribute to the substrate site. His176 (proton acceptor) is an active-site residue.

This sequence belongs to the LDH/MDH superfamily. MDH type 3 family.

The enzyme catalyses (S)-malate + NAD(+) = oxaloacetate + NADH + H(+). In terms of biological role, catalyzes the reversible oxidation of malate to oxaloacetate. The polypeptide is Malate dehydrogenase (Bartonella bacilliformis (strain ATCC 35685 / KC583 / Herrer 020/F12,63)).